A 51-amino-acid polypeptide reads, in one-letter code: UPF0181 protein HAPS_0710 (51 aa).

This sequence belongs to the UPF0181 family.

This chain is UPF0181 protein HAPS_0710, found in Glaesserella parasuis serovar 5 (strain SH0165) (Haemophilus parasuis).